Consider the following 157-residue polypeptide: Endoribonuclease YbeY (157 aa).

His-113, His-117, and His-123 together coordinate Zn(2+).

Belongs to the endoribonuclease YbeY family. Zn(2+) serves as cofactor.

Its subcellular location is the cytoplasm. In terms of biological role, single strand-specific metallo-endoribonuclease involved in late-stage 70S ribosome quality control and in maturation of the 3' terminus of the 16S rRNA. In Ehrlichia ruminantium (strain Gardel), this protein is Endoribonuclease YbeY.